The primary structure comprises 524 residues: Probable 1,3-beta-glucanosyltransferase GAS3 (524 aa).

Positions 1–21 (MQLSKSILLAALAATPSLVNA) are cleaved as a signal peptide. A disulfide bond links C78 and C107. Positions 96, 168, and 169 each coordinate (1,3-beta-D-glucosyl)n. E169 acts as the Proton donor in catalysis. Residue N201 is glycosylated (N-linked (GlcNAc...) asparagine). The (1,3-beta-D-glucosyl)n site is built by D212 and R217. 2 disulfides stabilise this stretch: C226/C369 and C254/C286. N-linked (GlcNAc...) asparagine glycosylation is present at N269. E283 functions as the Nucleophile in the catalytic mechanism. Y315 is a (1,3-beta-D-glucosyl)n binding site. N-linked (GlcNAc...) asparagine glycosylation is found at N350, N385, N404, and N422. The tract at residues 461 to 498 (TSQSSSRSLTSSTSPSSSTGSSSSTGSSSASSSSKSKG) is disordered. A lipid anchor (GPI-anchor amidated glycine) is attached at G498. Residues 499 to 524 (VGNIVNVSFSQSGYLALFAGLISALL) constitute a propeptide, removed in mature form.

This sequence belongs to the glycosyl hydrolase 72 family. Post-translationally, the GPI-anchor is attached to the protein in the endoplasmic reticulum and serves to target the protein to the cell surface. There, the glucosamine-inositol phospholipid moiety is cleaved off and the GPI-modified mannoprotein is covalently attached via its lipidless GPI glycan remnant to the 1,6-beta-glucan of the outer cell wall layer. In terms of processing, N-glycosylated.

It is found in the secreted. The protein resides in the cell wall. Its subcellular location is the membrane. Functionally, splits internally a 1,3-beta-glucan molecule and transfers the newly generated reducing end (the donor) to the non-reducing end of another 1,3-beta-glucan molecule (the acceptor) forming a 1,3-beta linkage, resulting in the elongation of 1,3-beta-glucan chains in the cell wall. Involved in cell wall biosynthesis and morphogenesis. This Saccharomyces cerevisiae (strain ATCC 204508 / S288c) (Baker's yeast) protein is Probable 1,3-beta-glucanosyltransferase GAS3 (GAS3).